The primary structure comprises 219 residues: Peptidyl-tRNA hydrolase (219 aa).

Residue Tyr26 participates in tRNA binding. The active-site Proton acceptor is His31. 3 residues coordinate tRNA: Tyr78, Asn80, and Asn126.

This sequence belongs to the PTH family. As to quaternary structure, monomer.

It localises to the cytoplasm. It carries out the reaction an N-acyl-L-alpha-aminoacyl-tRNA + H2O = an N-acyl-L-amino acid + a tRNA + H(+). Hydrolyzes ribosome-free peptidyl-tRNAs (with 1 or more amino acids incorporated), which drop off the ribosome during protein synthesis, or as a result of ribosome stalling. Functionally, catalyzes the release of premature peptidyl moieties from peptidyl-tRNA molecules trapped in stalled 50S ribosomal subunits, and thus maintains levels of free tRNAs and 50S ribosomes. The polypeptide is Peptidyl-tRNA hydrolase (Trichodesmium erythraeum (strain IMS101)).